Here is a 188-residue protein sequence, read N- to C-terminus: Protein-L-isoaspartate O-methyltransferase (188 aa).

Residue serine 33 is part of the active site.

Belongs to the methyltransferase superfamily. L-isoaspartyl/D-aspartyl protein methyltransferase family.

It localises to the cytoplasm. It carries out the reaction [protein]-L-isoaspartate + S-adenosyl-L-methionine = [protein]-L-isoaspartate alpha-methyl ester + S-adenosyl-L-homocysteine. In terms of biological role, catalyzes the methyl esterification of L-isoaspartyl residues in peptides and proteins that result from spontaneous decomposition of normal L-aspartyl and L-asparaginyl residues. It plays a role in the repair and/or degradation of damaged proteins. The sequence is that of Protein-L-isoaspartate O-methyltransferase from Methanocella arvoryzae (strain DSM 22066 / NBRC 105507 / MRE50).